A 101-amino-acid polypeptide reads, in one-letter code: Alkene monooxygenase system, effector subunit (101 aa).

It belongs to the TmoD/XamoD family. In terms of assembly, monomer. The alkene monooxygenase multicomponent enzyme system is composed of an electron transfer component and a monooxygenase component interacting with the effector protein XamoD. The electron transfer component is composed of a ferredoxin reductase (XamoF) and a ferredoxin (XamoC), and the monooxygenase component is formed by a heterohexamer (dimer of heterotrimers) of two alpha subunits (XamoA), two beta subunits (XamoE) and two gamma subunits (XamoB).

Its subcellular location is the cytoplasm. Effector component of the alkene monooxygenase multicomponent enzyme system which catalyzes the O2- and NADH-dependent epoxidation of short chain (C2 to C6) alkenes to their corresponding epoxides. One possible role of this small protein might be to facilitate electron transfer between the reductase and ferredoxin components. This chain is Alkene monooxygenase system, effector subunit, found in Xanthobacter autotrophicus (strain ATCC BAA-1158 / Py2).